A 40-amino-acid chain; its full sequence is Large ribosomal subunit protein bL36 (40 aa).

Belongs to the bacterial ribosomal protein bL36 family.

The protein is Large ribosomal subunit protein bL36 of Corynebacterium glutamicum (strain R).